Here is a 215-residue protein sequence, read N- to C-terminus: Ribosomal RNA small subunit methyltransferase G (215 aa).

Residues Gly-82, Met-87, Val-133–Glu-134, and Arg-148 each bind S-adenosyl-L-methionine.

This sequence belongs to the methyltransferase superfamily. RNA methyltransferase RsmG family.

The protein resides in the cytoplasm. The catalysed reaction is guanosine(527) in 16S rRNA + S-adenosyl-L-methionine = N(7)-methylguanosine(527) in 16S rRNA + S-adenosyl-L-homocysteine. In terms of biological role, specifically methylates the N7 position of guanine in position 527 of 16S rRNA. This Stutzerimonas stutzeri (strain A1501) (Pseudomonas stutzeri) protein is Ribosomal RNA small subunit methyltransferase G.